The following is a 500-amino-acid chain: Glutathione gamma-glutamylcysteinyltransferase 1 (500 aa).

The 221-residue stretch at 1-221 (MEVASLYRRV…GFMLVSRRSS (221 aa)) folds into the Peptidase C83 domain. Catalysis depends on residues Cys56, His162, and Asp180.

It belongs to the phytochelatin synthase family. As to expression, expressed in roots and shoots.

It catalyses the reaction [Glu(-Cys)](n)-Gly + glutathione + H(+) = [Glu(-Cys)](n+1)-Gly + glycine. With respect to regulation, requires cadmium for activity. Its function is as follows. Involved in the synthesis of phytochelatins (PC) and homophytochelatins (hPC), the heavy-metal-binding peptides of plants. In Triticum aestivum (Wheat), this protein is Glutathione gamma-glutamylcysteinyltransferase 1 (PCS1).